Consider the following 111-residue polypeptide: Cell cycle protein GpsB (111 aa).

A coiled-coil region spans residues 38-72 (IKDYEAFHKEFDQLKQQNARLKRELEEQKVAATQV).

The protein belongs to the GpsB family. Forms polymers through the coiled coil domains. Interacts with PBP1, MreC and EzrA.

Its subcellular location is the cytoplasm. Divisome component that associates with the complex late in its assembly, after the Z-ring is formed, and is dependent on DivIC and PBP2B for its recruitment to the divisome. Together with EzrA, is a key component of the system that regulates PBP1 localization during cell cycle progression. Its main role could be the removal of PBP1 from the cell pole after pole maturation is completed. Also contributes to the recruitment of PBP1 to the division complex. Not essential for septum formation. The chain is Cell cycle protein GpsB from Bacillus mycoides (strain KBAB4) (Bacillus weihenstephanensis).